Here is a 183-residue protein sequence, read N- to C-terminus: Bifunctional protein PyrR (183 aa).

Substrate-binding positions include 46 to 47 (TR), Arg87, 107 to 115 (DDVIFSGRT), Arg140, and Val164. The short motif at 103–115 (VVLVDDVIFSGRT) is the PRPP-binding element.

This sequence belongs to the purine/pyrimidine phosphoribosyltransferase family. PyrR subfamily.

The catalysed reaction is UMP + diphosphate = 5-phospho-alpha-D-ribose 1-diphosphate + uracil. Regulates the transcription of the pyrimidine nucleotide (pyr) operon in response to exogenous pyrimidines. In terms of biological role, also displays a weak uracil phosphoribosyltransferase activity which is not physiologically significant. The polypeptide is Bifunctional protein PyrR (Thermosynechococcus vestitus (strain NIES-2133 / IAM M-273 / BP-1)).